We begin with the raw amino-acid sequence, 297 residues long: L-ribulose 3-epimerase (297 aa).

The active-site Proton donor/acceptor is the glutamate 147. Residue glutamate 147 coordinates Mn(2+). Substrate contacts are provided by residues glutamate 153 and 180–183; that span reads DTFH. Residues aspartate 180 and histidine 206 each coordinate Mn(2+). Residue arginine 212 coordinates substrate. The active-site Proton donor/acceptor is glutamate 241. Position 241 (glutamate 241) interacts with Mn(2+).

It belongs to the hyi family. In terms of assembly, homotetramer. Requires Mn(2+) as cofactor.

The enzyme catalyses L-ribulose = L-xylulose. It carries out the reaction keto-D-tagatose = keto-D-sorbose. It catalyses the reaction D-allulose = keto-D-fructose. Its activity is regulated as follows. Strongly inhibited by Co(2+) and Ni(2+), and slightly inhibited by EDTA. Catalyzes the epimerization of various ketoses at the C(3) position. It is able to interconvert L-ribulose with high efficiency. The enzyme can also accept other ketopentoses such as D-psicose and D-tagatose with lower efficiency. The sequence is that of L-ribulose 3-epimerase from Mesorhizobium japonicum (strain LMG 29417 / CECT 9101 / MAFF 303099) (Mesorhizobium loti (strain MAFF 303099)).